The primary structure comprises 182 residues: UPF0316 protein BCQ_3166 (182 aa).

3 helical membrane-spanning segments follow: residues 6–26 (LIFV…ILLV), 32–52 (SAAA…GIVF), and 58–78 (WMNI…GGYI).

The protein belongs to the UPF0316 family.

It is found in the cell membrane. The sequence is that of UPF0316 protein BCQ_3166 from Bacillus cereus (strain Q1).